Reading from the N-terminus, the 111-residue chain is Nucleoid-associated protein lhv_0401 (111 aa).

Belongs to the YbaB/EbfC family. Homodimer.

It localises to the cytoplasm. Its subcellular location is the nucleoid. Its function is as follows. Binds to DNA and alters its conformation. May be involved in regulation of gene expression, nucleoid organization and DNA protection. The polypeptide is Nucleoid-associated protein lhv_0401 (Lactobacillus helveticus (strain DPC 4571)).